A 2864-amino-acid chain; its full sequence is Genome polyprotein (2864 aa).

2 stretches are compositionally biased toward polar residues: residues 1-10 (MPVISTQTSP) and 21-32 (QTQASYPVSIKT). Positions 1 to 49 (MPVISTQTSPVPAPRTRKNKQTQASYPVSIKTSVERGQRAKRKVQRDAR) are disordered. A helical membrane pass occupies residues 133 to 153 (WATGWFGVHLFVVCLLSLACP). N165, N212, and N264 each carry an N-linked (GlcNAc...) asparagine; by host glycan. The helical transmembrane segment at 324–344 (LIYYASRGKWYQLLLALMLYI) threads the bilayer. N380, N400, N422, N446, N467, and N512 each carry an N-linked (GlcNAc...) asparagine; by host glycan. Helical transmembrane passes span 582 to 602 (AVVL…AYLC), 628 to 648 (AGWD…FFIC), 660 to 680 (LLGF…AAAA), 706 to 726 (PRIA…LLHL), and 737 to 757 (IIGG…RFGF). N-linked (GlcNAc...) asparagine; by host glycosylation occurs at N782. The next 2 helical transmembrane spans lie at 790-810 (FLLV…TFCV) and 847-867 (WYSH…GVFF). Positions 819 to 940 (TSSAASFFGT…AMPPDGWAIT (122 aa)) constitute a Peptidase C18 domain. Residues H870, E888, and C909 each act as for protease NS2 activity; shared with dimeric partner in the active site. The Peptidase S29 domain maps to 941 to 1122 (APFTLQCLSE…VCAGYHPQYT (182 aa)). Active-site charge relay system; for serine protease NS3 activity residues include H997 and D1021. Positions 1037 and 1039 each coordinate Zn(2+). N-linked (GlcNAc...) asparagine; by host glycosylation occurs at N1057. S1079 acts as the Charge relay system; for serine protease NS3 activity in catalysis. Zn(2+)-binding residues include C1085 and H1089. One can recognise a Helicase ATP-binding domain in the interval 1131 to 1281 (PTVPNEYSVQ…ANITEIQLTD (151 aa)). Position 1144 to 1151 (1144 to 1151 (APTGSGKS)) interacts with ATP. Mg(2+)-binding residues include S1151 and E1229. A DECH box motif is present at residues 1228–1231 (DECH). N1273 carries N-linked (GlcNAc...) asparagine; by host glycosylation. The region spanning 1284–1449 (TIPFHGKKIK…GLSSTEAQTI (166 aa)) is the Helicase C-terminal domain. N1559 carries N-linked (GlcNAc...) asparagine; by host glycosylation. A run of 5 helical transmembrane segments spans residues 1565 to 1585 (ALAV…FGAT), 1653 to 1673 (FLGP…GLVT), 1678 to 1698 (PFAS…PHKI), 1722 to 1742 (FMMA…GFVF), and 1783 to 1803 (AAGV…TAGP). C1863 is lipidated: S-palmitoyl cysteine; by host. Residues 1864 to 1884 (GLIAWGLEIWQYVCNFFVICF) form a helical membrane-spanning segment. Residues C1905, C1923, C1925, and C1947 each coordinate Zn(2+). Disordered regions lie at residues 2139–2178 (TGSL…SPPV) and 2209–2266 (GPDD…TKKK). A compositionally biased stretch (polar residues) spans 2226–2240 (SDGSWSTTTTASSYV). Residues 2485 to 2603 (AVGATCDTVC…IWKSAGADAD (119 aa)) enclose the RdRp catalytic domain. Mg(2+) is bound by residues D2491, D2589, and D2590. 2 N-linked (GlcNAc...) asparagine; by host glycosylation sites follow: N2640 and N2722. A helical transmembrane segment spans residues 2844–2864 (VKYLAVIVFALGLIAVGLAIS).

In terms of assembly, homooligomer. Interacts with E1 (via C-terminus). Interacts with the non-structural protein 5A. Part of the viral assembly initiation complex composed of NS2, E1, E2, NS3, NS4A, NS5A and the core protein. Forms a heterodimer with envelope glycoprotein E2. Interacts with the core protein. Interacts with protease NS2. Part of the viral assembly initiation complex composed of NS2, E1, E2, NS3, NS4A, NS5A and the core protein. As to quaternary structure, forms a heterodimer with envelope glycoprotein E1. Part of the viral assembly initiation complex composed of NS2, E1, E2, NS3, NS4A, NS5A and the core protein. In terms of assembly, homodimer. Interacts with envelope glycoprotein E1. Interacts with envelope glycoprotein E2. Interacts with viroporin p7. Interacts with serine protease/helicase NS3. Part of the replication complex composed of NS2, NS3, NS4A, NS4B, NS5A and the RNA-directed RNA polymerase embedded in an ER-derived membranous web. Part of the viral assembly initiation complex composed of NS2, E1, E2, NS3, NS4A, NS5A and the core protein. Interacts with protease NS2. Interacts with non-structural protein 4A; this interaction stabilizes the folding of NS3 serine protease. NS3-NS4A interaction is essential for NS3 activation and allows membrane anchorage of the latter. Interacts with host MAVS; this interaction leads to the cleavage and inhibition of host MAVS. Part of the replication complex composed of NS2, NS3, NS4A, NS4B, NS5A and the RNA-directed RNA polymerase embedded in an ER-derived membranous web. Part of the viral assembly initiation complex composed of NS2, E1, E2, NS3, NS4A, NS5A and the core protein. As to quaternary structure, interacts with NS3 serine protease; this interaction stabilizes the folding of NS3 serine protease. NS3-NS4A interaction is essential for NS3 activation and allows membrane anchorage of the latter. Interacts with non-structural protein 5A (via N-terminus). Part of the replication complex composed of NS2, NS3, NS4A, NS4B, NS5A and the RNA-directed RNA polymerase embedded in an ER-derived membranous web. Part of the viral assembly initiation complex composed of NS2, E1, E2, NS3, NS4A, NS5A and the core protein. In terms of assembly, monomer. Homodimer; dimerization is required for RNA-binding. Interacts with the core protein. Interacts (via N-terminus) with non-structural protein 4A. Interacts with non-structural protein 4B. Interacts with RNA-directed RNA polymerase. Part of the viral assembly initiation complex composed of NS2, E1, E2, NS3, NS4A, NS5A and the core protein. Part of the replication complex composed of NS2, NS3, NS4A, NS4B, NS5A and the RNA-directed RNA polymerase. It depends on Zn(2+) as a cofactor. Mg(2+) serves as cofactor. The cofactor is Mn(2+). In terms of processing, specific enzymatic cleavages in vivo yield mature proteins. The structural proteins, core, E1, E2 and p7 are produced by proteolytic processing by host signal peptidases. The other proteins (p7, NS2, NS3, NS4A, NS4B, NS5A and NS5B) are cleaved by the viral proteases. Autoprocessing between NS2 and NS3 is mediated by the NS2 cysteine protease catalytic domain and regulated by the NS3 N-terminal domain. P13 may be further cleaved into p6 and p7 if the internal cleavage site is used. Highly N-glycosylated. Post-translationally, palmitoylated. This modification may play a role in its polymerization or in protein-protein interactions.

The protein resides in the virion. It localises to the host cytoplasm. It is found in the host lipid droplet. The protein localises to the virion membrane. Its subcellular location is the host endoplasmic reticulum membrane. The protein resides in the host perinuclear region. It localises to the host mitochondrion. It is found in the host nucleus. It catalyses the reaction Hydrolysis of four peptide bonds in the viral precursor polyprotein, commonly with Asp or Glu in the P6 position, Cys or Thr in P1 and Ser or Ala in P1'.. The catalysed reaction is a ribonucleoside 5'-triphosphate + H2O = a ribonucleoside 5'-diphosphate + phosphate + H(+). The enzyme catalyses ATP + H2O = ADP + phosphate + H(+). It carries out the reaction RNA(n) + a ribonucleoside 5'-triphosphate = RNA(n+1) + diphosphate. Functionally, packages viral RNA to form a viral nucleocapsid, and promotes virion budding. Participates in the viral particle production as a result of its interaction with the non-structural protein 5A. Binds RNA and may function as a RNA chaperone to induce the RNA structural rearrangements taking place during virus replication. Modulates viral translation initiation by interacting with viral IRES and 40S ribosomal subunit. Probably affects various cell signaling pathways, host immunity and lipid metabolism. Its function is as follows. Forms a heterodimer with envelope glycoprotein E2, which mediates virus attachment to the host cell, virion internalization through clathrin-dependent endocytosis and fusion with host membrane. Fusion with the host cell is most likely mediated by both E1 and E2, through conformational rearrangements of the heterodimer required for fusion rather than a classical class II fusion mechanism. In terms of biological role, forms a heterodimer with envelope glycoprotein E1, which mediates virus attachment to the host cell, virion internalization through clathrin-dependent endocytosis and fusion with host membrane. Fusion with the host cell is most likely mediated by both E1 and E2, through conformational rearrangements of the heterodimer required for fusion rather than a classical class II fusion mechanism. May function as a multimeric ion channel protein (viroporin). Functionally, cysteine protease required for the proteolytic auto-cleavage between the non-structural proteins NS2 and NS3. The N-terminus of NS3 is required for the function of NS2 protease (active region NS2-3). Promotes the initiation of viral particle assembly by mediating the interaction between structural and non-structural proteins. Its function is as follows. Displays three enzymatic activities: serine protease with a chymotrypsin-like fold, NTPase and RNA helicase. NS3 serine protease, in association with NS4A, is responsible for the cleavages of NS3-NS4A, NS4A-NS4B, NS4B-NS5A and NS5A-NS5B. The NS3/NS4A complex prevents phosphorylation of host IRF3, thus preventing the establishment of dsRNA induced antiviral state. NS3 RNA helicase binds to RNA and unwinds both dsDNA and dsRNA in the 3' to 5' direction, and likely resolves RNA complicated stable secondary structures in the template strand. Cleaves host MAVS/CARDIF thereby preventing the establishment of an antiviral state. In terms of biological role, induces a specific membrane alteration that serves as a scaffold for the virus replication complex. This membrane alteration gives rise to the so-called ER-derived membranous web that contains the replication complex. NS4B self-interaction contributes to its function in membranous web formation. Phosphorylated protein that is indispensable for viral replication and assembly. Functionally, RNA-dependent RNA polymerase that performs primer-template recognition and RNA synthesis during viral replication. Initiates RNA transcription/replication at a flavin adenine dinucleotide (FAD), resulting in a 5'- FAD cap on viral RNAs. In this way, recognition of viral 5' RNA by host pattern recognition receptors can be bypassed, thereby evading activation of antiviral pathways. The polypeptide is Genome polyprotein (Hepatitis GB virus B (GBV-B)).